The primary structure comprises 152 residues: MKKIQNVFAAIKTGLLAKATCVTVNGSKRVFEVLSAFENEGLIRGFQIIDIKTNKVSIYLKYKQDMTSLLSRIKAVSVNKEKLYLKGKVLTKFYPRVNLYFIESKFGLKTLPQLQLRNKMLKTPIGGEIKYIIEINKVNPKLQELMKKKNEI.

It belongs to the universal ribosomal protein uS8 family.

It is found in the mitochondrion. The sequence is that of Small ribosomal subunit protein uS8m (mrps8) from Dictyostelium citrinum (Slime mold).